Reading from the N-terminus, the 327-residue chain is Zinc transport protein ZntB (327 aa).

Residues Met-1–Met-273 lie on the Cytoplasmic side of the membrane. Residues Ala-274–Ile-294 form a helical membrane-spanning segment. The Periplasmic portion of the chain corresponds to Pro-295–Arg-300. A helical membrane pass occupies residues Phe-301–Leu-321. The Cytoplasmic portion of the chain corresponds to His-322–Leu-327.

Belongs to the CorA metal ion transporter (MIT) (TC 1.A.35) family.

It is found in the cell inner membrane. It carries out the reaction Zn(2+)(out) + H(+)(out) = Zn(2+)(in) + H(+)(in). Zinc transporter. Acts as a Zn(2+):proton symporter, which likely mediates zinc ion uptake. In Salmonella choleraesuis (strain SC-B67), this protein is Zinc transport protein ZntB.